The primary structure comprises 262 residues: Phycoerythrobilin:ferredoxin oxidoreductase (262 aa).

It belongs to the HY2 family.

The enzyme catalyses (3Z)-phycoerythrobilin + oxidized 2[4Fe-4S]-[ferredoxin] = 15,16-dihydrobiliverdin + reduced 2[4Fe-4S]-[ferredoxin] + 2 H(+). Catalyzes the two-electron reduction of the C2 and C3(1) diene system of 15,16-dihydrobiliverdin. This chain is Phycoerythrobilin:ferredoxin oxidoreductase (pebB), found in Parasynechococcus marenigrum (strain WH8102).